Reading from the N-terminus, the 398-residue chain is CCA-adding enzyme (398 aa).

Residues G32 and R35 each coordinate ATP. Positions 32 and 35 each coordinate CTP. Mg(2+) contacts are provided by D45 and D47. 5 residues coordinate ATP: R116, D159, R162, R165, and R168. Positions 116, 159, 162, 165, and 168 each coordinate CTP.

Belongs to the tRNA nucleotidyltransferase/poly(A) polymerase family. Bacterial CCA-adding enzyme type 3 subfamily. In terms of assembly, homodimer. It depends on Mg(2+) as a cofactor.

The catalysed reaction is a tRNA precursor + 2 CTP + ATP = a tRNA with a 3' CCA end + 3 diphosphate. It catalyses the reaction a tRNA with a 3' CCA end + 2 CTP + ATP = a tRNA with a 3' CCACCA end + 3 diphosphate. Catalyzes the addition and repair of the essential 3'-terminal CCA sequence in tRNAs without using a nucleic acid template. Adds these three nucleotides in the order of C, C, and A to the tRNA nucleotide-73, using CTP and ATP as substrates and producing inorganic pyrophosphate. tRNA 3'-terminal CCA addition is required both for tRNA processing and repair. Also involved in tRNA surveillance by mediating tandem CCA addition to generate a CCACCA at the 3' terminus of unstable tRNAs. While stable tRNAs receive only 3'-terminal CCA, unstable tRNAs are marked with CCACCA and rapidly degraded. The sequence is that of CCA-adding enzyme from Lactobacillus johnsonii (strain CNCM I-12250 / La1 / NCC 533).